We begin with the raw amino-acid sequence, 225 residues long: Acidic leucine-rich nuclear phosphoprotein 32-related protein 2 (225 aa).

3 LRR repeats span residues 39–60 (KLEL…PVLP), 61–82 (ALNY…DVLI), and 87–107 (EIKK…RTLK). Residues 121 to 161 (SSLGLLDDYRVKMFEMIPSLKILDGCDVDGEEVEEEFAAGE) enclose the LRRCT domain. Positions 155-175 (EEFAAGEGAEDSDEGDSDEDG) are enriched in acidic residues. Positions 155 to 225 (EEFAAGEGAE…DEPEAKKSAE (71 aa)) are disordered.

This sequence belongs to the ANP32 family.

The protein is Acidic leucine-rich nuclear phosphoprotein 32-related protein 2 of Caenorhabditis elegans.